The following is a 307-amino-acid chain: DNA damage tolerance protein rad31 (307 aa).

Could be involved in a ubiquitin-related process important for DNA damage tolerance. Acts in a process which is defective in the checkpoint rad mutants and which involves hus5. The sequence is that of DNA damage tolerance protein rad31 (rad31) from Schizosaccharomyces pombe (strain 972 / ATCC 24843) (Fission yeast).